The primary structure comprises 721 residues: MEGKNTSITFDGREIRLTTGLYAPQAGGAVMIECGDTSLLVTATKTTKKQAADFLPLICDYEEKLYAAGRIPGGFMRREGRPPERATLIARLIDRPMRPLFPSWMRDEIQIVASCLSLDERVPADVLGVTGASIATLLAEIPFYGPMAAVRVGLIGDDFILNPSYREIEKGDLDIVVAGSPEGIVMIEAGANQLSEQDTIEAIDFGYEAVSELIKAQENLLKDLGIKQVKPLEPEEDKALATYLEKNCTKPIDLILKKFDQSKEERDLELDKIELEVQTKIDSLKDDNQLKVLTSENEKLIHSDFKKLTKKLMRSQIINEGKRVDGRDLDEVRKISASAGILPKRVHGSALFQRGLTQVLSTTTLGTPSDAQEMDDLNPSTEKTYLHHYNFPPYSVGETRPMRTPGRREIGHGALAERAITPVLPGKETFPYVLRVVSEVLSSNGSTSMGSVCGSTLSLLDAGVPLKAPVSGTAMGLIKEGKEVRILTDIQGIEDFLGDMDFKVAGTEKGITALQMDMKITGLPVSVISDAIKKARPARLHILEKMQEAIDKPQESLSPHAPRLLSFRIDPELIGTVIGPGGRTIKGITERTNTKIDIEDGGIVTIASHDGAAAEEAQKIIEGLTRKVHEGEIFPGVVTRIIPIGAFVEILPGKEGMVHISQLSEARVERVEDVVRQGDEVTVRVREIDSRGRINLTLRGVAQNGGMSYPEPTPTPVAPLN.

The Mg(2+) site is built by Asp-495 and Asp-501. In terms of domain architecture, KH spans 562–621 (PRLLSFRIDPELIGTVIGPGGRTIKGITERTNTKIDIEDGGIVTIASHDGAAAEEAQKII). The S1 motif domain maps to 631 to 699 (GEIFPGVVTR…SRGRINLTLR (69 aa)).

It belongs to the polyribonucleotide nucleotidyltransferase family. It depends on Mg(2+) as a cofactor.

Its subcellular location is the cytoplasm. It catalyses the reaction RNA(n+1) + phosphate = RNA(n) + a ribonucleoside 5'-diphosphate. Involved in mRNA degradation. Catalyzes the phosphorolysis of single-stranded polyribonucleotides processively in the 3'- to 5'-direction. The protein is Polyribonucleotide nucleotidyltransferase of Prochlorococcus marinus subsp. pastoris (strain CCMP1986 / NIES-2087 / MED4).